The following is a 166-amino-acid chain: Peptidyl-prolyl cis-trans isomerase-like 1 (166 aa).

Positions Gln10–Pro164 constitute a PPIase cyclophilin-type domain. Residues His54–Gly65, Thr70–Gly71, Ala99–Gly104, Gly109–Phe113, Thr119, and Lys125 contribute to the cyclosporin A site. Ser149 is subject to Phosphoserine.

It belongs to the cyclophilin-type PPIase family. PPIL1 subfamily. In terms of assembly, identified in the spliceosome C complex. Interacts with SNW1/SKIP. Interacts with CDC40/PRP17; this interaction leads to CDC40 isomerization. Interacts with RBM22.

It is found in the nucleus. It catalyses the reaction [protein]-peptidylproline (omega=180) = [protein]-peptidylproline (omega=0). With respect to regulation, inhibited by Cyclosporin A. In terms of biological role, involved in pre-mRNA splicing as component of the spliceosome. PPIases accelerate the folding of proteins. It catalyzes the cis-trans isomerization of proline imidic peptide bonds in oligopeptides. Catalyzes prolyl peptide bond isomerization in CDC40/PRP17. Plays an important role in embryonic brain development; this function is independent of its isomerase activity. This is Peptidyl-prolyl cis-trans isomerase-like 1 (PPIL1) from Bos taurus (Bovine).